Consider the following 87-residue polypeptide: Small ribosomal subunit protein uS17 (87 aa).

This sequence belongs to the universal ribosomal protein uS17 family. In terms of assembly, part of the 30S ribosomal subunit.

In terms of biological role, one of the primary rRNA binding proteins, it binds specifically to the 5'-end of 16S ribosomal RNA. The protein is Small ribosomal subunit protein uS17 of Staphylococcus carnosus (strain TM300).